Here is a 56-residue protein sequence, read N- to C-terminus: Large ribosomal subunit protein bL32 (56 aa).

Residues 1 to 35 (MAVQQNKSTRSKRGMRRSHHALRSVTISVDRTSGE) are disordered. Residues 9–22 (TRSKRGMRRSHHAL) show a composition bias toward basic residues.

Belongs to the bacterial ribosomal protein bL32 family.

The sequence is that of Large ribosomal subunit protein bL32 from Blochmanniella pennsylvanica (strain BPEN).